The following is a 336-amino-acid chain: Dihydroorotate dehydrogenase (quinone) (336 aa).

Residues 62 to 66 and threonine 86 contribute to the FMN site; that span reads AGLDK. Lysine 66 contacts substrate. 111-115 lines the substrate pocket; the sequence is NRMGF. Residues asparagine 139 and asparagine 172 each coordinate FMN. A substrate-binding site is contributed by asparagine 172. Residue serine 175 is the Nucleophile of the active site. A substrate-binding site is contributed by asparagine 177. 2 residues coordinate FMN: lysine 217 and threonine 245. Position 246–247 (246–247) interacts with substrate; that stretch reads NT. Residues glycine 268, glycine 297, and 318-319 each bind FMN; that span reads YS.

This sequence belongs to the dihydroorotate dehydrogenase family. Type 2 subfamily. Monomer. FMN serves as cofactor.

It is found in the cell membrane. It catalyses the reaction (S)-dihydroorotate + a quinone = orotate + a quinol. The protein operates within pyrimidine metabolism; UMP biosynthesis via de novo pathway; orotate from (S)-dihydroorotate (quinone route): step 1/1. In terms of biological role, catalyzes the conversion of dihydroorotate to orotate with quinone as electron acceptor. The sequence is that of Dihydroorotate dehydrogenase (quinone) from Salmonella agona (strain SL483).